A 549-amino-acid chain; its full sequence is Glucose-6-phosphate isomerase (549 aa).

E355 functions as the Proton donor in the catalytic mechanism. Residues H386 and K514 contribute to the active site.

It belongs to the GPI family.

The protein localises to the cytoplasm. It catalyses the reaction alpha-D-glucose 6-phosphate = beta-D-fructose 6-phosphate. The protein operates within carbohydrate biosynthesis; gluconeogenesis. It participates in carbohydrate degradation; glycolysis; D-glyceraldehyde 3-phosphate and glycerone phosphate from D-glucose: step 2/4. Catalyzes the reversible isomerization of glucose-6-phosphate to fructose-6-phosphate. This chain is Glucose-6-phosphate isomerase, found in Klebsiella pneumoniae (strain 342).